A 381-amino-acid polypeptide reads, in one-letter code: Chaperone protein DnaJ (381 aa).

The 64-residue stretch at 3-66 (DYYETLGVER…DKRRMYDSGV (64 aa)) folds into the J domain. The segment at 129–211 (GGTAHVKINT…CMGHGRVRTT (83 aa)) adopts a CR-type zinc-finger fold. Zn(2+) contacts are provided by C142, C145, C159, C162, C185, C188, C199, and C202. CXXCXGXG motif repeat units lie at residues 142–149 (CQECGGSG), 159–166 (CPDCHGQG), 185–192 (CERCEGHG), and 199–206 (CPSCMGHG). Positions 355 to 381 (ATHVSQASRPQAGQKKGFFSKLKDALS) are disordered. Residues 356 to 365 (THVSQASRPQ) are compositionally biased toward polar residues.

This sequence belongs to the DnaJ family. Homodimer. The cofactor is Zn(2+).

Its subcellular location is the cytoplasm. Its function is as follows. Participates actively in the response to hyperosmotic and heat shock by preventing the aggregation of stress-denatured proteins and by disaggregating proteins, also in an autonomous, DnaK-independent fashion. Unfolded proteins bind initially to DnaJ; upon interaction with the DnaJ-bound protein, DnaK hydrolyzes its bound ATP, resulting in the formation of a stable complex. GrpE releases ADP from DnaK; ATP binding to DnaK triggers the release of the substrate protein, thus completing the reaction cycle. Several rounds of ATP-dependent interactions between DnaJ, DnaK and GrpE are required for fully efficient folding. Also involved, together with DnaK and GrpE, in the DNA replication of plasmids through activation of initiation proteins. The sequence is that of Chaperone protein DnaJ from Bifidobacterium longum (strain NCC 2705).